Here is a 1099-residue protein sequence, read N- to C-terminus: Solute carrier family 12 member 1 (1099 aa).

Residues 1 to 177 (MSLNNSSSVF…EDNKAGAVKF (177 aa)) are Cytoplasmic-facing. The RFXV motif signature appears at 20–23 (RFQV). A phosphoserine mark is found at S60 and S90. Phosphothreonine is present on residues T94, T99, T104, and T117. Residue S119 is modified to Phosphoserine. Phosphoserine; by AMPK is present on S129. Position 147 is a phosphoserine (S147). A disordered region spans residues 147–169 (SADRVANGEGMPGEEHAENKEED). Over residues 159 to 169 (GEEHAENKEED) the composition is skewed to basic and acidic residues. A helical transmembrane segment spans residues 178–198 (GWVKGVLVRCMLNIWGVMLFI). The Extracellular portion of the chain corresponds to 199-201 (RLS). A helical membrane pass occupies residues 202 to 222 (WIVGEAGIGLGVVIILLSTMV). Over 223-259 (TSITGLSTSAIATNGFVRGGGAYYLISRSLGPEFGGS) the chain is Cytoplasmic. Residues 260–280 (IGLIFAFANAVAVAMYVVGFA) traverse the membrane as a helical segment. Topologically, residues 281–302 (ETVVDLLKESDSMMVDPTNDIR) are extracellular. Residues 303 to 323 (IIGSITVVILLGISVAGMEWE) form a helical membrane-spanning segment. Residues 324–327 (AKAQ) lie on the Cytoplasmic side of the membrane. Residues 328 to 348 (VILLIILLIAIANFFIGTVIP) form a helical membrane-spanning segment. Topologically, residues 349–379 (SNNEKKSRGFFNYQASIFAENFGPSFTKGEG) are extracellular. The chain crosses the membrane as a helical span at residues 380–400 (FFSVFAIFFPAATGILAGANI). Residues 401 to 417 (SGDLEDPQDAIPRGTML) lie on the Cytoplasmic side of the membrane. A helical transmembrane segment spans residues 418-438 (AIFITTVAYIGVAICVGACVV). Residues 439–550 (RDATGSMNDT…NNEPLRGYIL (112 aa)) are Extracellular-facing. Residues N446 and N456 are each glycosylated (N-linked (GlcNAc...) asparagine). A run of 2 helical transmembrane segments spans residues 551–571 (TFVI…APII) and 572–592 (SNFF…ASYA). The Extracellular portion of the chain corresponds to 593-609 (KSPGWRPAYGIYNMWVS). A helical membrane pass occupies residues 610–630 (LFGAVLCCAVMFVINWWAAVI). Residues 631 to 1099 (TYVIEFFLYI…NHKNVLTFYS (469 aa)) are Cytoplasmic-facing.

Belongs to the SLC12A transporter family. When phosphorylated, interacts with PPP3CB. In terms of processing, phosphorylated at Ser-90, Thr-99 and Thr-104 by OXSR1/OSR1 and STK39/SPAK downstream of WNK kinases (WNK1, WNK2, WNK3 or WNK4), promoting its activity. In terms of tissue distribution, predominant in kidney. The 3 isoforms are differentially distributed within the kidney: B almost exclusively in cortex, F almost exclusively in medulla, and A about equally distributed.

The protein resides in the apical cell membrane. It catalyses the reaction K(+)(out) + 2 chloride(out) + Na(+)(out) = K(+)(in) + 2 chloride(in) + Na(+)(in). Its activity is regulated as follows. Activated following phosphorylation by OXSR1/OSR1 and STK39/SPAK downstream of WNK kinases (WNK1, WNK2, WNK3 or WNK4). Functionally, renal sodium, potassium and chloride ion cotransporter that mediates the transepithelial NaCl reabsorption in the thick ascending limb and plays an essential role in the urinary concentration and volume regulation. Electrically silent transporter system. The polypeptide is Solute carrier family 12 member 1 (SLC12A1) (Oryctolagus cuniculus (Rabbit)).